A 691-amino-acid polypeptide reads, in one-letter code: DNA ligase (691 aa).

NAD(+) contacts are provided by residues 41–45 (DAEYD), 90–91 (SL), and glutamate 130. The active-site N6-AMP-lysine intermediate is lysine 132. 4 residues coordinate NAD(+): arginine 153, glutamate 190, lysine 307, and lysine 331. 4 residues coordinate Zn(2+): cysteine 425, cysteine 428, cysteine 443, and cysteine 449. The BRCT domain occupies 610 to 691 (APQGVLAGKT…MHTLLEGHAR (82 aa)).

Belongs to the NAD-dependent DNA ligase family. LigA subfamily. Requires Mg(2+) as cofactor. Mn(2+) is required as a cofactor.

The catalysed reaction is NAD(+) + (deoxyribonucleotide)n-3'-hydroxyl + 5'-phospho-(deoxyribonucleotide)m = (deoxyribonucleotide)n+m + AMP + beta-nicotinamide D-nucleotide.. In terms of biological role, DNA ligase that catalyzes the formation of phosphodiester linkages between 5'-phosphoryl and 3'-hydroxyl groups in double-stranded DNA using NAD as a coenzyme and as the energy source for the reaction. It is essential for DNA replication and repair of damaged DNA. The sequence is that of DNA ligase from Burkholderia pseudomallei (strain 1106a).